The following is a 171-amino-acid chain: Large ribosomal subunit protein uL10 (171 aa).

It belongs to the universal ribosomal protein uL10 family. In terms of assembly, part of the ribosomal stalk of the 50S ribosomal subunit. The N-terminus interacts with L11 and the large rRNA to form the base of the stalk. The C-terminus forms an elongated spine to which L12 dimers bind in a sequential fashion forming a multimeric L10(L12)X complex.

Functionally, forms part of the ribosomal stalk, playing a central role in the interaction of the ribosome with GTP-bound translation factors. This is Large ribosomal subunit protein uL10 from Rhizorhabdus wittichii (strain DSM 6014 / CCUG 31198 / JCM 15750 / NBRC 105917 / EY 4224 / RW1) (Sphingomonas wittichii).